The primary structure comprises 263 residues: Indolethylamine N-methyltransferase (263 aa).

The residue at position 13 (lysine 13) is an N6-succinyllysine. S-adenosyl-L-methionine-binding positions include tyrosine 20, tyrosine 25, 63-64, tyrosine 69, aspartate 85, and asparagine 90; that span reads GS. Lysine 96 carries the post-translational modification N6-succinyllysine. S-adenosyl-L-methionine is bound by residues 142-143 and leucine 163; that span reads DA.

The protein belongs to the class I-like SAM-binding methyltransferase superfamily. NNMT/PNMT/TEMT family. Monomer. In terms of tissue distribution, highly expressed in lung, also detected in liver and at very low levels in brain.

The protein localises to the cytoplasm. It carries out the reaction a tertiary amine + S-adenosyl-L-methionine = a methylated tertiary amine + S-adenosyl-L-homocysteine + H(+). The enzyme catalyses a secondary amine + S-adenosyl-L-methionine = a methylated secondary amine + S-adenosyl-L-homocysteine + H(+). The catalysed reaction is a primary amine + S-adenosyl-L-methionine = a methylated primary amine + S-adenosyl-L-homocysteine + H(+). It catalyses the reaction dimethyl sulfide + S-adenosyl-L-methionine = trimethylsulfonium + S-adenosyl-L-homocysteine. Catalyzes the N-methylation of tryptamine and structurally related compounds. Functions as a thioether S-methyltransferase and is active with a variety of thioethers and the corresponding selenium and tellurium compounds, including 3-methylthiopropionaldehyde, dimethyl selenide, dimethyl telluride, 2-methylthioethylamine, 2-methylthioethanol, methyl-n-propyl sulfide and diethyl sulfide. Plays an important role in the detoxification of selenium compounds. In Oryctolagus cuniculus (Rabbit), this protein is Indolethylamine N-methyltransferase (INMT).